The primary structure comprises 365 residues: tRNA/tmRNA (uracil-C(5))-methyltransferase (365 aa).

Residues Q189, Y217, N222, E238, and D298 each contribute to the S-adenosyl-L-methionine site. Catalysis depends on C323, which acts as the Nucleophile. E357 serves as the catalytic Proton acceptor.

The protein belongs to the class I-like SAM-binding methyltransferase superfamily. RNA M5U methyltransferase family. TrmA subfamily.

It catalyses the reaction uridine(54) in tRNA + S-adenosyl-L-methionine = 5-methyluridine(54) in tRNA + S-adenosyl-L-homocysteine + H(+). The enzyme catalyses uridine(341) in tmRNA + S-adenosyl-L-methionine = 5-methyluridine(341) in tmRNA + S-adenosyl-L-homocysteine + H(+). In terms of biological role, dual-specificity methyltransferase that catalyzes the formation of 5-methyluridine at position 54 (m5U54) in all tRNAs, and that of position 341 (m5U341) in tmRNA (transfer-mRNA). This Pasteurella multocida (strain Pm70) protein is tRNA/tmRNA (uracil-C(5))-methyltransferase.